Consider the following 411-residue polypeptide: Tyrosine--tRNA ligase (411 aa).

Tyr-34 provides a ligand contact to L-tyrosine. The 'HIGH' region signature appears at 39–48 (CTATSLHIGS). L-tyrosine-binding residues include Tyr-171 and Gln-175. A 'KMSKS' region motif is present at residues 231–235 (KMGKT). Lys-234 lines the ATP pocket. The S4 RNA-binding domain maps to 345-411 (ISAYELFHEA…GKKRHILVRV (67 aa)).

The protein belongs to the class-I aminoacyl-tRNA synthetase family. TyrS type 1 subfamily. As to quaternary structure, homodimer.

Its subcellular location is the cytoplasm. It carries out the reaction tRNA(Tyr) + L-tyrosine + ATP = L-tyrosyl-tRNA(Tyr) + AMP + diphosphate + H(+). Functionally, catalyzes the attachment of tyrosine to tRNA(Tyr) in a two-step reaction: tyrosine is first activated by ATP to form Tyr-AMP and then transferred to the acceptor end of tRNA(Tyr). In Rickettsia peacockii (strain Rustic), this protein is Tyrosine--tRNA ligase.